A 104-amino-acid polypeptide reads, in one-letter code: MTEKWIDAVALYEIPEGDVLGVTVEGKELALYEVEGEIYATDNLCTHGAARMSDGFLEGREIECPLHQGRFDVCTGRALCAPVTQNIKTYPVKIEGQRVMIDLS.

Residues 6–101 form the Rieske domain; sequence IDAVALYEIP…VKIEGQRVMI (96 aa). [2Fe-2S] cluster contacts are provided by cysteine 45, histidine 47, cysteine 64, and histidine 67.

Belongs to the bacterial ring-hydroxylating dioxygenase ferredoxin component family. As to quaternary structure, the naphthalene dioxygenase (NDO) multicomponent enzyme system is composed of an electron transfer component and a dioxygenase component (iron sulfur protein (ISP)). The electron transfer component is composed of a ferredoxin reductase (NdoR) and a ferredoxin (NdoA), and the dioxygenase component is formed of a heterohexamer (trimer of heterodimers) of three large alpha subunits (NdoB) and three small beta subunits (NdoC). [2Fe-2S] cluster serves as cofactor.

Its pathway is aromatic compound metabolism; naphthalene degradation. Component of the naphthalene dioxygenase (NDO) multicomponent enzyme system which catalyzes the incorporation of both atoms of molecular oxygen into naphthalene to form cis-(1R,2S)-dihydroxy-1,2-dihydronaphthalene. Functions as an intermediate electron transfer protein via a specific interaction with iron sulfur protein components (ISP) (NdoB and NdoC). This Pseudomonas aeruginosa protein is Naphthalene 1,2-dioxygenase system, ferredoxin component.